The chain runs to 54 residues: Small ribosomal subunit protein uS14 (54 aa).

Residues C19, C22, C37, and C40 each coordinate Zn(2+).

It belongs to the universal ribosomal protein uS14 family. Zinc-binding uS14 subfamily. Part of the 30S ribosomal subunit. The cofactor is Zn(2+).

Binds 16S rRNA, required for the assembly of 30S particles. The chain is Small ribosomal subunit protein uS14 from Saccharolobus solfataricus (strain ATCC 35092 / DSM 1617 / JCM 11322 / P2) (Sulfolobus solfataricus).